The chain runs to 531 residues: Light-independent protochlorophyllide reductase subunit B (531 aa).

Asp-36 is a binding site for [4Fe-4S] cluster. The active-site Proton donor is the Asp-291. 426–427 (GL) provides a ligand contact to substrate.

The protein belongs to the ChlB/BchB/BchZ family. Protochlorophyllide reductase is composed of three subunits; ChlL, ChlN and ChlB. Forms a heterotetramer of two ChlB and two ChlN subunits. [4Fe-4S] cluster is required as a cofactor.

It catalyses the reaction chlorophyllide a + oxidized 2[4Fe-4S]-[ferredoxin] + 2 ADP + 2 phosphate = protochlorophyllide a + reduced 2[4Fe-4S]-[ferredoxin] + 2 ATP + 2 H2O. Its pathway is porphyrin-containing compound metabolism; chlorophyll biosynthesis (light-independent). Component of the dark-operative protochlorophyllide reductase (DPOR) that uses Mg-ATP and reduced ferredoxin to reduce ring D of protochlorophyllide (Pchlide) to form chlorophyllide a (Chlide). This reaction is light-independent. The NB-protein (ChlN-ChlB) is the catalytic component of the complex. The polypeptide is Light-independent protochlorophyllide reductase subunit B (Prochlorococcus marinus (strain MIT 9211)).